A 61-amino-acid polypeptide reads, in one-letter code: Beta-defensin 13 (61 aa).

Residues 1 to 21 (MRLLYLLFAAVMLLFLQAVPA) form the signal peptide. Ser-24, Arg-40, His-44, Asn-51, Asn-53, Gly-54, His-58, and Lys-61 together coordinate a 1,2-diacyl-sn-glycero-3-phosphate. 3 disulfides stabilise this stretch: Cys-31–Cys-59, Cys-38–Cys-52, and Cys-42–Cys-60.

The protein belongs to the beta-defensin family. Monomeric. Forms multimeric, probably including tetrameric, complexes in the presence of phospholipid phosphatidic acid.

The protein localises to the secreted. In terms of biological role, exhibits antimicrobial activity against fungi. Antimicrobial activity in a pH-dependent manner against the yeast C.albicans; activity is salt tolerant and retains antifungal activity in NaCl concentrations of 100mM. Permeabilizes C.albicans cell membranes via targeting plasma membrane phospholipid phosphatidic acid. In Crocodylus porosus (Saltwater crocodile), this protein is Beta-defensin 13.